Consider the following 255-residue polypeptide: Large ribosomal subunit protein uL4 (255 aa).

It belongs to the universal ribosomal protein uL4 family. In terms of assembly, part of the 50S ribosomal subunit.

Its function is as follows. One of the primary rRNA binding proteins, this protein initially binds near the 5'-end of the 23S rRNA. It is important during the early stages of 50S assembly. It makes multiple contacts with different domains of the 23S rRNA in the assembled 50S subunit and ribosome. In terms of biological role, forms part of the polypeptide exit tunnel. The sequence is that of Large ribosomal subunit protein uL4 from Thermoplasma acidophilum (strain ATCC 25905 / DSM 1728 / JCM 9062 / NBRC 15155 / AMRC-C165).